A 545-amino-acid chain; its full sequence is Betaine receptor acr-23 (545 aa).

An N-terminal signal peptide occupies residues 1–19; that stretch reads MHRIYTFLIFISQLALGLS. Topologically, residues 20-244 are extracellular; that stretch reads NNPDIPIQYE…DVVIQRKPLY (225 aa). 2 N-linked (GlcNAc...) asparagine glycosylation sites follow: Asn53 and Asn97. Cystine bridges form between Cys157/Cys171 and Cys224/Cys225. The N-linked (GlcNAc...) asparagine glycan is linked to Asn228. A helical transmembrane segment spans residues 245 to 265; sequence YVLNLIAPTAVITFISIIGFF. An N-linked (GlcNAc...) asparagine glycan is attached at Asn276. The next 2 membrane-spanning stretches (helical) occupy residues 287 to 307 and 317 to 337; these read EKIT…FMVS and VPLI…GTLA. At 338–512 the chain is on the cytoplasmic side; that stretch reads ASSVIFVQKL…WDWVAAVLER (175 aa). Residues 513–533 form a helical membrane-spanning segment; that stretch reads VFLIFFTICFLFSAIGINLYG.

The protein belongs to the ligand-gated ion channel (TC 1.A.9) family. Acetylcholine receptor (TC 1.A.9.1) subfamily. Expressed in the body wall muscles that are arranged into four longitudinal bundles, some mechanosensory neurons, the head muscles and multiple interneurons. Not expressed in motor neurons (at protein level).

The protein localises to the cell membrane. Betaine receptor that functions as a ligand-gated non-selective monovalent cation channel in mechanosensory neurons to maintain basal levels of locomotion. The channel is permeable to Na(+) and K(+) but not to Ba(2+) or Ca(2+) ions. Elicits current in response to betaine, very weak current in response to choline, virtually no current in response to acetylcholine and nicotine, and no current in response to glycine and GABA. This Caenorhabditis elegans protein is Betaine receptor acr-23.